The chain runs to 432 residues: MPVLNLKSDLADADDLETLMAGIGRRARAAGRAMALAPAQTKDLGLRAIAEQIRASAPAILRENARDVSAAQAAGLTNAIIDRLTLDEGRVAAIAEAVEKVAGLADPVGRQLAAFERPNGLLIERISVPLGVVGVIFESRPNVTADAGALCLKAGNAAILRAGSDSHRTATAIAAAMSEGLARAGLPADAIQLVPTRDRAAVGLMLTGLGGCVDVIVPRGGRSLVERVQAEAKVPVFAHLDGICHVYVAEGADLGMARSLLLNSKMRRTGICGAAETLLVDAAVAETHLKPLVEALLESGCAVRGDAATQAADPRVSAATDADWRTEYLDAIISAKVVGGLDAAIAHIEANGSHHTDAIITDDTDAAARFLNEVDSAIVTHNASTQFADGGEFGFGAEIGIATGRMHARGPVGVEQLTTFKYRVHGSGQTRP.

The protein belongs to the gamma-glutamyl phosphate reductase family.

It localises to the cytoplasm. It catalyses the reaction L-glutamate 5-semialdehyde + phosphate + NADP(+) = L-glutamyl 5-phosphate + NADPH + H(+). Its pathway is amino-acid biosynthesis; L-proline biosynthesis; L-glutamate 5-semialdehyde from L-glutamate: step 2/2. Its function is as follows. Catalyzes the NADPH-dependent reduction of L-glutamate 5-phosphate into L-glutamate 5-semialdehyde and phosphate. The product spontaneously undergoes cyclization to form 1-pyrroline-5-carboxylate. This is Gamma-glutamyl phosphate reductase from Methylorubrum extorquens (strain PA1) (Methylobacterium extorquens).